The primary structure comprises 375 residues: tRNA-specific 2-thiouridylase MnmA 3 (375 aa).

ATP-binding positions include 11 to 18 (GMSGGIDS) and Met-37. The active-site Nucleophile is the Cys-104. A disulfide bridge links Cys-104 with Cys-201. An ATP-binding site is contributed by Gly-128. The segment at 150–152 (KDQ) is interaction with tRNA. Catalysis depends on Cys-201, which acts as the Cysteine persulfide intermediate. Residues 309-310 (RY) are interaction with tRNA.

It belongs to the MnmA/TRMU family.

The protein localises to the cytoplasm. It carries out the reaction S-sulfanyl-L-cysteinyl-[protein] + uridine(34) in tRNA + AH2 + ATP = 2-thiouridine(34) in tRNA + L-cysteinyl-[protein] + A + AMP + diphosphate + H(+). Catalyzes the 2-thiolation of uridine at the wobble position (U34) of tRNA, leading to the formation of s(2)U34. The chain is tRNA-specific 2-thiouridylase MnmA 3 from Phocaeicola vulgatus (strain ATCC 8482 / DSM 1447 / JCM 5826 / CCUG 4940 / NBRC 14291 / NCTC 11154) (Bacteroides vulgatus).